Consider the following 118-residue polypeptide: Ribosome-binding factor A (118 aa).

This sequence belongs to the RbfA family. As to quaternary structure, monomer. Binds 30S ribosomal subunits, but not 50S ribosomal subunits or 70S ribosomes.

It localises to the cytoplasm. Functionally, one of several proteins that assist in the late maturation steps of the functional core of the 30S ribosomal subunit. Associates with free 30S ribosomal subunits (but not with 30S subunits that are part of 70S ribosomes or polysomes). Required for efficient processing of 16S rRNA. May interact with the 5'-terminal helix region of 16S rRNA. The chain is Ribosome-binding factor A from Geobacter sulfurreducens (strain ATCC 51573 / DSM 12127 / PCA).